The chain runs to 478 residues: Zinc metalloproteinase/disintegrin ussurin (478 aa).

The first 20 residues, 1 to 20, serve as a signal peptide directing secretion; that stretch reads MIQVLLVTICLAAFPYQGSS. The propeptide occupies 21 to 190; the sequence is IILESGNVND…KKASPLVVTT (170 aa). A Peptidase M12B domain is found at 193 to 389; sequence RYVELVVVAD…RNPQCILNKP (197 aa). Residues Glu-196 and Asp-280 each contribute to the Ca(2+) site. Intrachain disulfides connect Cys-304-Cys-384, Cys-344-Cys-368, and Cys-346-Cys-351. A Zn(2+)-binding site is contributed by His-329. Glu-330 is a catalytic residue. His-333 and His-339 together coordinate Zn(2+). Ca(2+) contacts are provided by Cys-384 and Asn-387. The propeptide occupies 390 to 413; that stretch reads LRTDIVSTPVSGNELLEAGEECDC. The Disintegrin domain occupies 397-478; the sequence is TPVSGNELLE…AGCPRNPFHA (82 aa). 6 disulfides stabilise this stretch: Cys-411–Cys-426, Cys-413–Cys-421, Cys-420–Cys-443, Cys-434–Cys-440, Cys-439–Cys-464, and Cys-452–Cys-471. The Cell attachment site motif lies at 456–458; sequence RGD.

This sequence belongs to the venom metalloproteinase (M12B) family. P-II subfamily. P-IIa sub-subfamily. Monomer. Zn(2+) serves as cofactor. As to expression, expressed by the venom gland.

It is found in the secreted. Functionally, impairs hemostasis in the envenomed animal. In terms of biological role, inhibits platelet aggregation induced by ADP, thrombin, platelet-activating factor and collagen. Acts by inhibiting fibrinogen interaction with platelet receptors GPIIb/GPIIIa (ITGA2B/ITGB3). The polypeptide is Zinc metalloproteinase/disintegrin ussurin (Gloydius ussuriensis (Ussuri mamushi)).